Here is a 539-residue protein sequence, read N- to C-terminus: Carboxysome assembly protein CcmM (539 aa).

The carbonic anhydrase-like domain stretch occupies residues 1–214 (MPSPTTVPVA…PLRPSSSEAT (214 aa)). Positions 194–213 (TADFHSTPTPSPLRPSSSEA) are disordered. The RbcS-like repeat 1, SSUL1 repeat unit spans residues 226–397 (SSEVITQVRS…VLAELENCLS (172 aa)). 2 disulfides stabilise this stretch: Cys-261–Cys-279 and Cys-377–Cys-395. One copy of the RbcS-like repeat 2, SSUL2 repeat lies at 341–425 (LSAEVVNKVR…RVFEALIQDP (85 aa)). Residues 427 to 459 (GPVGSAKAAAAPVSSATPSSHSYTSNGSSSSDV) form a disordered region. Over residues 431–457 (SAKAAAAPVSSATPSSHSYTSNGSSSS) the composition is skewed to low complexity. The stretch at 453 to 539 (GSSSSDVAGQ…RVAELLIQKP (87 aa)) is one RbcS-like repeat 3, SSUL3 repeat.

Belongs to the gamma-class carbonic anhydrase family. Probably a homotrimer. Purifies from carboxysomes in complex with both RuBisCO subunits and carbonic anhydrase (ccaA); the complex is probably associated with the carboxysome shell. Interacts with CcmN. Binds holo-RuBisCO (RbcL(8)-RbcS(8)) via its SSUL domains; the SSUL domain binds close to the equitorial domain of RuBisCO between RbcL dimers, with 1 M35 protein per dimer. As to quaternary structure, the short form purifies from carboxysomes in complex with both RuBisCO subunits; the complex is probably associated with the carboxysome shell. Identified as 2 proteins of 58 and 38 kDa by mass spectrometry, called M58 and M35, the shorter protein is translated starting at Val-216. Protease inhibitors do not alter the appearance of M35. In isolated carboxysomes M35 is 4-5 fold more abundant. The first amino acid (equivalent to Val-216) is not seen in Edman degradation, while Tyr-219 and Gln-222 may be post-translationally modified.

The protein localises to the carboxysome. Functionally, functions as a scaffold protein for the assembly of beta-carboxysomes, initiates carboxysome assembly by coalescing RuBisCO (ribulose bisphosphate carboxylase, rbcL-rbcS). Produced as a full-length (M58) and a shorter form (M35); both forms are required for correct carboxysome assembly and growth. The short form is more abundant. Despite its strong similarity to gamma-class carbonic anhydrase (CA) it does not have detectable CA activity. The M35 isoform is able to condense RuBisCO into a liquid matrix; the presence of disulfide bonds in M35 reduces affinity for RuBisCO, while mutating all 4 Cys to Ser causes a 4-fold increase in doubling time, more than 15% increase in CO(2) requirement, and abnormal carboxysomes. In terms of biological role, beta-carboxysome assembly initiates when soluble RuBisCO is condensed into a liquid matrix in a pre-carboxysome by the RbcS-like domains of probably both CcmM58 and CcmM35. CcmN interacts with the N-terminus of CcmM58, and then recruits the CcmK2 major shell protein plus other less abundant CcmK proteins via CcmN's encapsulation peptide. Shell formation requires CcmK proteins and CcmO. CcmL caps the otherwise elongated carboxysome. Once fully encapsulated carboxysomes are formed, they migrate within the cell probably via interactions with the cytoskeleton. The sequence is that of Carboxysome assembly protein CcmM from Synechococcus elongatus (strain ATCC 33912 / PCC 7942 / FACHB-805) (Anacystis nidulans R2).